A 132-amino-acid polypeptide reads, in one-letter code: MVMTDPIADLLTRVRNANAVKHEVVEVPSSNVKKAITNILLQEGYIKNIEEYNDGVVPMLRISLKYGANNERVITGIKRISKPGLRVYCKKDEVPKVLNGLGVAVISTSKGLVVDREARKDGLGGEVLCYVW.

It belongs to the universal ribosomal protein uS8 family. Part of the 30S ribosomal subunit. Contacts proteins S5 and S12.

Its function is as follows. One of the primary rRNA binding proteins, it binds directly to 16S rRNA central domain where it helps coordinate assembly of the platform of the 30S subunit. This is Small ribosomal subunit protein uS8 from Clostridium botulinum (strain Alaska E43 / Type E3).